The following is a 209-amino-acid chain: V-type ATP synthase subunit D (209 aa).

This sequence belongs to the V-ATPase D subunit family.

Its function is as follows. Produces ATP from ADP in the presence of a proton gradient across the membrane. This chain is V-type ATP synthase subunit D (atpD), found in Chlamydia pneumoniae (Chlamydophila pneumoniae).